The primary structure comprises 533 residues: Probable ribonuclease ZC3H12D (533 aa).

Residues 92–246 (LRPIVIDGSN…PLGRRGPTLS (155 aa)) form the RNase NYN domain. The C3H1-type zinc-finger motif lies at 251–282 (KKPRPPEPSWQHCPYGKKCTYGVKCRFYHPER). The interval 262-368 (HCPYGKKCTY…ASGVVSQSRG (107 aa)) is necessary for interaction with ZC3H12A. A disordered region spans residues 302 to 335 (LGGGAEEPRTPSARSRPTTARLLPQEPGEHDLPP).

Belongs to the ZC3H12 family. As to quaternary structure, interacts with ZC3H12A. It depends on Mg(2+) as a cofactor. As to expression, expressed at low levels in bone marrow derived macrophages.

The protein localises to the cytoplasm. The protein resides in the P-body. In terms of biological role, may regulate cell growth likely by suppressing RB1 phosphorylation. May function as RNase and regulate the levels of target RNA species (Potential). In association with ZC3H12A enhances the degradation of interleukin IL-6 mRNA level in activated macrophages. Serve as a tumor suppressor in certain leukemia cells. Overexpression inhibits the G1 to S phase progression through suppression of RB1 phosphorylation. The polypeptide is Probable ribonuclease ZC3H12D (Mus musculus (Mouse)).